A 195-amino-acid polypeptide reads, in one-letter code: Small ribosomal subunit protein uS4B (195 aa).

The region spanning 107–181 is the S4 RNA-binding domain; it reads RRLQTQVYKL…VARRNAARKA (75 aa). The segment at 161–195 is disordered; sequence TSPFGGARPGRVARRNAARKAEASGEAAEEAEDEE. Residue Lys180 forms a Glycyl lysine isopeptide (Lys-Gly) (interchain with G-Cter in ubiquitin) linkage. The residue at position 184 (Ser184) is a Phosphoserine.

The protein belongs to the universal ribosomal protein uS4 family. Component of the small ribosomal subunit (SSU). Mature yeast ribosomes consist of a small (40S) and a large (60S) subunit. The 40S small subunit contains 1 molecule of ribosomal RNA (18S rRNA) and 33 different proteins (encoded by 57 genes). The large 60S subunit contains 3 rRNA molecules (25S, 5.8S and 5S rRNA) and 46 different proteins (encoded by 81 genes). Interacts with snoRNA U3. uS11 interacts with MPP10. Component of the ribosomal small subunit (SSU) processome composed of at least 40 protein subunits and snoRNA U3.

It localises to the cytoplasm. The protein localises to the nucleus. Its subcellular location is the nucleolus. Its function is as follows. Component of the ribosome, a large ribonucleoprotein complex responsible for the synthesis of proteins in the cell. The small ribosomal subunit (SSU) binds messenger RNAs (mRNAs) and translates the encoded message by selecting cognate aminoacyl-transfer RNA (tRNA) molecules. The large subunit (LSU) contains the ribosomal catalytic site termed the peptidyl transferase center (PTC), which catalyzes the formation of peptide bonds, thereby polymerizing the amino acids delivered by tRNAs into a polypeptide chain. The nascent polypeptides leave the ribosome through a tunnel in the LSU and interact with protein factors that function in enzymatic processing, targeting, and the membrane insertion of nascent chains at the exit of the ribosomal tunnel. uS4 is involved in nucleolar processing of pre-18S ribosomal RNA and ribosome assembly. The sequence is that of Small ribosomal subunit protein uS4B from Saccharomyces cerevisiae (strain ATCC 204508 / S288c) (Baker's yeast).